The primary structure comprises 316 residues: Small kinetochore-associated protein (316 aa).

S128 is modified (phosphoserine). Residues 159 to 316 (VRKGYKPLSK…LKEMEQLLEM (158 aa)) form an interaction with SPAG5 region. 2 coiled-coil regions span residues 166–216 (LSKQ…FRDN) and 248–316 (SMLL…LLEM).

In terms of assembly, part of an astrin (SPAG5)-kinastrin (SKAP) complex containing KNSTRN, SPAG5, PLK1, DYNLL1 and SGO2. Interacts with SPAG5. Directly binds to microtubules, although at relatively low affinity. Interacts with CENPE; this interaction greatly favors microtubule-binding. Interacts with DSN1/MIS13; leading to localization to kinetochores. Interacts with MAPRE1/EB1; leading to localization to the microtubule plus ends. Interacts with PRPF19. Interacts with DYNLL1. Interacts with MAP4. As to expression, widely expressed, including in skin.

The protein resides in the nucleus. The protein localises to the chromosome. It localises to the centromere. Its subcellular location is the kinetochore. It is found in the cytoplasm. The protein resides in the cytoskeleton. The protein localises to the spindle pole. It localises to the microtubule organizing center. Functionally, essential component of the mitotic spindle required for faithful chromosome segregation and progression into anaphase. Promotes the metaphase-to-anaphase transition and is required for chromosome alignment, normal timing of sister chromatid segregation, and maintenance of spindle pole architecture. The astrin (SPAG5)-kinastrin (SKAP) complex promotes stable microtubule-kinetochore attachments. Required for kinetochore oscillations and dynamics of microtubule plus-ends during live cell mitosis, possibly by forming a link between spindle microtubule plus-ends and mitotic chromosomes to achieve faithful cell division. May be involved in UV-induced apoptosis via its interaction with PRPF19; however, these results need additional evidences. In Homo sapiens (Human), this protein is Small kinetochore-associated protein.